Here is a 403-residue protein sequence, read N- to C-terminus: SEC14-like protein 2 (403 aa).

Lys-51 is subject to N6-succinyllysine. Residues 76–249 (PPEVIQQYLS…EYGGTMTDPD (174 aa)) form the CRAL-TRIO domain. An N6-succinyllysine mark is found at Lys-253 and Lys-257. The GOLD domain occupies 275–383 (KQQYEHSVQI…AKKVNFTVEV (109 aa)). The residue at position 393 (Lys-393) is an N6-succinyllysine.

As to quaternary structure, monomer. In terms of tissue distribution, widely expressed. Strong expression in liver, brain and prostate.

It is found in the cytoplasm. It localises to the nucleus. Its function is as follows. Carrier protein. Binds to some hydrophobic molecules and promotes their transfer between the different cellular sites. Binds with high affinity to alpha-tocopherol. Also binds with a weaker affinity to other tocopherols and to tocotrienols. May have a transcriptional activatory activity via its association with alpha-tocopherol. Probably recognizes and binds some squalene structure, suggesting that it may regulate cholesterol biosynthesis by increasing the transfer of squalene to a metabolic active pool in the cell. This chain is SEC14-like protein 2 (SEC14L2), found in Homo sapiens (Human).